The primary structure comprises 65 residues: UPF0434 protein CPS_2127 (65 aa).

It belongs to the UPF0434 family.

The protein is UPF0434 protein CPS_2127 of Colwellia psychrerythraea (strain 34H / ATCC BAA-681) (Vibrio psychroerythus).